We begin with the raw amino-acid sequence, 1217 residues long: ATP-dependent helicase/nuclease subunit A (1217 aa).

One can recognise a UvrD-like helicase ATP-binding domain in the interval 10-475 (VIWTDAQWQS…IDLSQNFRSR (466 aa)). 31–38 (AAAGSGKT) is a binding site for ATP. The 311-residue stretch at 476–786 (KEVLSTTNYI…RMMTIHSSKG (311 aa)) folds into the UvrD-like helicase C-terminal domain.

The protein belongs to the helicase family. AddA subfamily. Heterodimer of AddA and AddB/RexB. Mg(2+) serves as cofactor.

The catalysed reaction is Couples ATP hydrolysis with the unwinding of duplex DNA by translocating in the 3'-5' direction.. The enzyme catalyses ATP + H2O = ADP + phosphate + H(+). Its function is as follows. The heterodimer acts as both an ATP-dependent DNA helicase and an ATP-dependent, dual-direction single-stranded exonuclease. Recognizes the chi site generating a DNA molecule suitable for the initiation of homologous recombination. The AddA nuclease domain is required for chi fragment generation; this subunit has the helicase and 3' -&gt; 5' nuclease activities. The chain is ATP-dependent helicase/nuclease subunit A from Staphylococcus aureus (strain Mu3 / ATCC 700698).